A 385-amino-acid polypeptide reads, in one-letter code: Lipoyl synthase, mitochondrial (385 aa).

The segment at 18 to 40 is disordered; it reads TKAKNRTFSSSTVESSTKQPPQF. Residues cysteine 113, cysteine 118, cysteine 124, cysteine 144, cysteine 148, cysteine 151, and serine 360 each contribute to the [4Fe-4S] cluster site. The Radical SAM core domain occupies 129 to 349; the sequence is ETGTATATIM…KTLGMEMGFR (221 aa).

It belongs to the radical SAM superfamily. Lipoyl synthase family. The cofactor is [4Fe-4S] cluster.

It localises to the mitochondrion. The catalysed reaction is [[Fe-S] cluster scaffold protein carrying a second [4Fe-4S](2+) cluster] + N(6)-octanoyl-L-lysyl-[protein] + 2 oxidized [2Fe-2S]-[ferredoxin] + 2 S-adenosyl-L-methionine + 4 H(+) = [[Fe-S] cluster scaffold protein] + N(6)-[(R)-dihydrolipoyl]-L-lysyl-[protein] + 4 Fe(3+) + 2 hydrogen sulfide + 2 5'-deoxyadenosine + 2 L-methionine + 2 reduced [2Fe-2S]-[ferredoxin]. It participates in protein modification; protein lipoylation via endogenous pathway; protein N(6)-(lipoyl)lysine from octanoyl-[acyl-carrier-protein]: step 2/2. Catalyzes the radical-mediated insertion of two sulfur atoms into the C-6 and C-8 positions of the octanoyl moiety bound to the lipoyl domains of lipoate-dependent enzymes, thereby converting the octanoylated domains into lipoylated derivatives. The protein is Lipoyl synthase, mitochondrial of Populus trichocarpa (Western balsam poplar).